We begin with the raw amino-acid sequence, 858 residues long: MAQVLHVSAPFPGTPGPASPPAFPSKEPDVPYSVETPYGYRLDLDFLKYVDDIEKGHTLRRVAVQRRPRLGSLPRGPGSWWTSTESLCSNASGDSRHSAYSYCGRGFYPQYGALETRGGFNPRVERTLLDARRRLEDQAAAPAGLGSLTPSAAGSTSSLVGVGLPPPTPRGSGLSTPVPPSAGHLAHVREQMAGALRKLRQLEEQVKLIPVLQVKLSVLQEEKRQLTVQLKSQKFLGHPAGARGRGELCLDLPEAPEDPVTLETRSVGTWVRERDLGMPDGEAALAAKVAVLETQLKKALQELQAAQARQADLPPQAWPPPDSPVRVDTVRVVQGPREVEVAASTAAGAPAQRAQSLEPYGAGLRALATSNGAESPPVFRSHEVMETVFPAPTASTSNVHQVKKISITERSCDGAAGHPQAPAESSLSPPESEGATQAQPEKNTGQVPAHDDTTIKEPIRQAACHESEFEEAGGAGGAQAGLRSIMKQKEEPTDPEAHRRSLQFVGVNGSISPRYESSSEDSSTAENFSDNESTENEAPEPEERVPSVAEAPQLRPKETAKAKTSREESQLPQESLHTPTAEGASGSSAKDEIRMELSPDLISACLALEKYLENPKALTERELKVAYTTVLQEWLRLACRSDAHPELVRRHLVTFRAMSARLLDYVVNIADSNGNTALHYSVSHANFPVVQQLLDSGVCQVDKQNRAGYSPIMLTALATLKTQDDIQTILQLFRLGDVNAKASQAGQTALMLAVSHGRVDVVKALLACEADVNVQDDDGSTALMCACEHGHKEITALLLAVPSCDISITDRDGSTALMVALDAGHSEIASMLYSRMNIKCSFAPMSDDESPASSSAEE.

The tract at residues 1–29 (MAQVLHVSAPFPGTPGPASPPAFPSKEPD) is disordered. The interval 1-72 (MAQVLHVSAP…AVQRRPRLGS (72 aa)) is interaction with AIFM1. Over residues 12-23 (PGTPGPASPPAF) the composition is skewed to pro residues. 5 positions are modified to phosphoserine: serine 19, serine 83, serine 86, serine 89, and serine 92. Omega-N-methylarginine is present on arginine 105. A disordered region spans residues 140–182 (AAPAGLGSLTPSAAGSTSSLVGVGLPPPTPRGSGLSTPVPPSA). The span at 148-159 (LTPSAAGSTSSL) shows a compositional bias: polar residues. Threonine 168 is modified (phosphothreonine). Coiled coils occupy residues 183–234 (GHLA…KSQK) and 282–313 (EAAL…QADL). Position 323 is a phosphoserine (serine 323). Threonine 329 is subject to Phosphothreonine. Residues serine 356 and serine 375 each carry the phosphoserine modification. Disordered stretches follow at residues 412–451 (CDGA…PAHD) and 488–590 (QKEE…SSAK). Over residues 421–435 (APAESSLSPPESEGA) the composition is skewed to low complexity. The span at 436-446 (TQAQPEKNTGQ) shows a compositional bias: polar residues. A compositionally biased stretch (basic and acidic residues) spans 488–499 (QKEEPTDPEAHR). Residues 509–528 (GSISPRYESSSEDSSTAENF) are compositionally biased toward low complexity. Serine 547 carries the post-translational modification Phosphoserine. The segment covering 555-569 (RPKETAKAKTSREES) has biased composition (basic and acidic residues). Residue threonine 559 is modified to Phosphothreonine. The stretch at 621-658 (RELKVAYTTVLQEWLRLACRSDAHPELVRRHLVTFRAM) is one ANK 0; degenerate repeat. ANK repeat units follow at residues 673-703 (NGNT…QVDK), 707-740 (AGYS…DVNA), 745-774 (AGQT…DVNV), 778-808 (DGST…DISI), and 812-842 (DGST…KCSF). Positions 676 to 842 (TALHYSVSHA…YSRMNIKCSF (167 aa)) are interaction with NCOA1.

Interacts (non-phosphorylated form) with NCOA1; NCOA2 AND NCOA3. Interacts with AIFM1. Interacts with ARHGDIA; the interaction is direct and may regulate the interaction of ARHGDIA with RHOA, RAC1 and CDC42. Interacts (via ANK repeats 1-5) with KIF21A. In terms of processing, phosphorylated by casein kinase II upon estrogen stimulation. Phosphorylation induces the release by KANK2 of NCOA1 and its translocation to the nucleus where NCOA1 can activate gene transcription.

It is found in the cytoplasm. Its subcellular location is the mitochondrion. Involved in transcription regulation by sequestering in the cytoplasm nuclear receptor coactivators such as NCOA1, NCOA2 and NCOA3. Involved in regulation of caspase-independent apoptosis by sequestering the proapoptotic factor AIFM1 in mitochondria. Pro-apoptotic stimuli can induce its proteasomal degradation allowing the translocation of AIFM1 to the nucleus to induce apoptosis. Involved in the negative control of vitamin D receptor signaling pathway. Involved in actin stress fibers formation through its interaction with ARHGDIA and the regulation of the Rho signaling pathway. May thereby play a role in cell adhesion and migration, regulating for instance podocytes migration during development of the kidney. Through the Rho signaling pathway may also regulate cell proliferation. This is KN motif and ankyrin repeat domain-containing protein 2 (KANK2) from Bos taurus (Bovine).